Consider the following 308-residue polypeptide: Elongation factor Ts (308 aa).

Positions 80–83 (TDFV) are involved in Mg(2+) ion dislocation from EF-Tu.

It belongs to the EF-Ts family.

Its subcellular location is the cytoplasm. Its function is as follows. Associates with the EF-Tu.GDP complex and induces the exchange of GDP to GTP. It remains bound to the aminoacyl-tRNA.EF-Tu.GTP complex up to the GTP hydrolysis stage on the ribosome. This Parvibaculum lavamentivorans (strain DS-1 / DSM 13023 / NCIMB 13966) protein is Elongation factor Ts.